The primary structure comprises 72 residues: Large ribosomal subunit protein bL31 (72 aa).

Belongs to the bacterial ribosomal protein bL31 family. Type A subfamily. Part of the 50S ribosomal subunit.

Functionally, binds the 23S rRNA. This chain is Large ribosomal subunit protein bL31, found in Prosthecochloris aestuarii (strain DSM 271 / SK 413).